The primary structure comprises 219 residues: Lipoprotein-releasing system ATP-binding protein LolD (219 aa).

One can recognise an ABC transporter domain in the interval 5–219 (LKAGDIFKTY…KVVMQDGVII (215 aa)). 37–44 (GASGAGKS) lines the ATP pocket.

The protein belongs to the ABC transporter superfamily. Lipoprotein translocase (TC 3.A.1.125) family. As to quaternary structure, the complex is composed of two ATP-binding proteins (LolD) and two transmembrane proteins (LolC and LolE).

It localises to the cell inner membrane. In terms of biological role, part of the ABC transporter complex LolCDE involved in the translocation of mature outer membrane-directed lipoproteins, from the inner membrane to the periplasmic chaperone, LolA. Responsible for the formation of the LolA-lipoprotein complex in an ATP-dependent manner. The chain is Lipoprotein-releasing system ATP-binding protein LolD from Cytophaga hutchinsonii (strain ATCC 33406 / DSM 1761 / CIP 103989 / NBRC 15051 / NCIMB 9469 / D465).